A 1411-amino-acid polypeptide reads, in one-letter code: Early endosome antigen 1 (1411 aa).

A disordered region spans residues 1 to 27 (MFRRILQRTPGRVGSQGSDLDSSATPI). The span at 15–27 (SQGSDLDSSATPI) shows a compositional bias: polar residues. The segment at 41–64 (FICPQCMKSLGSADELFKHYQAVH) adopts a C2H2-type zinc-finger fold. 2 positions are modified to phosphoserine: serine 52 and serine 70. Residues 78-1348 (LALTRDDITL…IKHTQALNRK (1271 aa)) are a coiled coil. 2 disordered regions span residues 476-501 (STELQHQLEKSKQQHQEQQALQQSAT) and 1189-1217 (EKESQQLMREQVKKEEEKRKEEFSEKEAK). Positions 481-490 (HQLEKSKQQH) are enriched in basic and acidic residues. The span at 491–500 (QEQQALQQSA) shows a compositional bias: low complexity. An FYVE-type zinc finger spans residues 1352-1410 (DNEVQNCMSCGKCFSVTVRRHHCRQCGNIFCAECSTKNALTPSSKKPVRVCDACFNDLQ). Zn(2+)-binding residues include cysteine 1358, cysteine 1361, cysteine 1374, cysteine 1377, cysteine 1382, cysteine 1385, cysteine 1402, and cysteine 1405.

Homodimer. Binds STX6. Binds RAB5A, RAB5B, RAB5C and RAB22A that have been activated by GTP-binding. Interacts with ERBB2. Interacts with RAB31. Interacts with SAMD9 and SAMD9L. May interact with PLEKHF2.

It localises to the cytoplasm. It is found in the early endosome membrane. Its function is as follows. Binds phospholipid vesicles containing phosphatidylinositol 3-phosphate and participates in endosomal trafficking. This Mus musculus (Mouse) protein is Early endosome antigen 1 (Eea1).